The chain runs to 177 residues: Outer membrane lipoprotein Blc (177 aa).

The N-terminal stretch at 1–18 is a signal peptide; sequence MRLLPLVAAATAAFLVVA. Cysteine 19 carries N-palmitoyl cysteine lipidation. Cysteine 19 carries the S-diacylglycerol cysteine lipid modification.

It belongs to the calycin superfamily. Lipocalin family. In terms of assembly, homodimer.

It is found in the cell outer membrane. Involved in the storage or transport of lipids necessary for membrane maintenance under stressful conditions. Displays a binding preference for lysophospholipids. This is Outer membrane lipoprotein Blc (blc) from Escherichia coli O157:H7.